The chain runs to 267 residues: Lyso-ornithine lipid O-acyltransferase (267 aa).

The helical transmembrane segment at 7 to 27 (IFLVVAAMVALSLSLIPFQYL) threads the bilayer.

It belongs to the 1-acyl-sn-glycerol-3-phosphate acyltransferase family. OlsA subfamily.

Its subcellular location is the membrane. The enzyme catalyses a lyso-ornithine lipid + a fatty acyl-[ACP] = an N(2)-[(3R)-3-(acyloxy)acyl]-L-ornithine lipid + holo-[ACP]. Its pathway is lipid metabolism. Its function is as follows. Catalyzes the second step in the formation of ornithine lipids, which are phosphorus-free membrane lipids. Uses acyl-acyl carrier protein (acyl-AcpP) as an acyl donor and converts lyso-ornithine lipid (LOL) into ornithine lipid (OL). The sequence is that of Lyso-ornithine lipid O-acyltransferase from Brucella abortus (strain 2308).